A 285-amino-acid polypeptide reads, in one-letter code: Urease accessory protein UreD (285 aa).

It belongs to the UreD family. In terms of assembly, ureD, UreF and UreG form a complex that acts as a GTP-hydrolysis-dependent molecular chaperone, activating the urease apoprotein by helping to assemble the nickel containing metallocenter of UreC. The UreE protein probably delivers the nickel.

The protein resides in the cytoplasm. In terms of biological role, required for maturation of urease via the functional incorporation of the urease nickel metallocenter. The sequence is that of Urease accessory protein UreD from Cytophaga hutchinsonii (strain ATCC 33406 / DSM 1761 / CIP 103989 / NBRC 15051 / NCIMB 9469 / D465).